The sequence spans 226 residues: Pathogenesis-related protein R minor form (226 aa).

A signal peptide spans 1 to 25 (MNFLKSFPFYAFLCFGQYFVAVTHA). Intrachain disulfides connect Cys34–Cys225, Cys75–Cys85, Cys90–Cys96, Cys140–Cys214, Cys145–Cys197, Cys153–Cys163, Cys167–Cys176, and Cys177–Cys184.

This sequence belongs to the thaumatin family.

The protein localises to the vacuole. The protein is Pathogenesis-related protein R minor form of Nicotiana tabacum (Common tobacco).